A 290-amino-acid chain; its full sequence is 4-hydroxybenzoate octaprenyltransferase (290 aa).

Helical transmembrane passes span 41-61 (WPLL…GCAM), 89-109 (WEAV…IQPL), 133-153 (FFAI…PMAF), 158-178 (DTVP…SVAY), 202-224 (FGRF…YVWI), and 269-289 (WLGG…GTAG).

Belongs to the UbiA prenyltransferase family. Mg(2+) serves as cofactor.

It is found in the cell inner membrane. The catalysed reaction is all-trans-octaprenyl diphosphate + 4-hydroxybenzoate = 4-hydroxy-3-(all-trans-octaprenyl)benzoate + diphosphate. Its pathway is cofactor biosynthesis; ubiquinone biosynthesis. Functionally, catalyzes the prenylation of para-hydroxybenzoate (PHB) with an all-trans polyprenyl group. Mediates the second step in the final reaction sequence of ubiquinone-8 (UQ-8) biosynthesis, which is the condensation of the polyisoprenoid side chain with PHB, generating the first membrane-bound Q intermediate 3-octaprenyl-4-hydroxybenzoate. This Burkholderia ambifaria (strain ATCC BAA-244 / DSM 16087 / CCUG 44356 / LMG 19182 / AMMD) (Burkholderia cepacia (strain AMMD)) protein is 4-hydroxybenzoate octaprenyltransferase.